The following is a 1226-amino-acid chain: MDSFDLALLQEWDLESLCVYEPDRNALRRKERERRNQETQQDDGTFNSSYSLFSEPYKTNKGDELSNRIQNTLGNYDEMKDFLTDRSNQSHLVGVPKPGVPQTPVNKIDEHFVADSRAQNQPSSICSTTTSTPAAVPVQQSKRGTMGWQKAGHPPSDGQQRATQQGSLRTLLGDGVGRQQPRAKQVCNVEVGLQTQERPPAMAAKHSSSGHCVQNFPPSLASKPSLVQQKPTAYVRPMDGQDQAPDESPKLKSSSETSVHCTSYRGVPASKPEPARAKAKLSKFSIPKQGEESRSGETNSCVEEIIREMTWLPPLSAIQAPGKVEPTKFPFPNKDSQLVSSGHNNPKKGDAEPESPDNGTSNTSMLEDDLKLSSDEEENEQQAAQRTALRALSDSAVVQQPNCRTSVPSSKGSSSSSSSGSSSSSSDSESSSGSDSETESSSSESEGSKPPHFSSPEAEPASSNKWQLDKWLNKVNPHKPPILIQNESHGSESNQYYNPVKEDVQDCGKVPDVCQPSLREKEIKSTCKEEQRPRTANKAPGSKGVKQKSPPAAVAVAVSAAAPPPAVPCAPAENAPAPARRSAGKKPTRRTERTSAGDGANCHRPEEPAAADALGTSVVVPPEPTKTRPCGNNRASHRKELRSSVTCEKRRTRGLSRIVPKSKEFIETESSSSSSSSDSDLESEQEEYPLSKAQTVAASASSGNDQRLKEAAANGGSGPRAPVGSINARTTSDIAKELEEQFYTLVPFGRNELLSPLKDSDEIRSLWVKIDLTLLSRIPEHLPQEPGVLSAPATKDSESAPPSHTSDTPAEKALPKSKRKRKCDNEDDYREIKKSQGEKDSSSRLATSTSNTLSANHCNMNINSVAIPINKNEKMLRSPISPLSDASKHKYTSEDLTSSSRPNGNSLFTSASSSKKPKADSQLQPHGGDLTKAAHNNSENIPLHKSRPQTKPWSPGSNGHRDCKRQKLVFDDMPRSADYFMQEAKRMKHKADAMVEKFGKALNYAEAALSFIECGNAMEQGPMESKSPYTMYSETVELIRYAMRLKTHSGPNATPEDKQLAALCYRCLALLYWRMFRLKRDHAVKYSKALIDYFKNSSKAAQAPSPWGASGKSTGTPSPMSPNPSPASSVGSQGSLSNASALSPSTIVSIPQRIHQMAANHVSITNSILHSYDYWEMADNLAKENREFFNDLDLLMGPVTLHSSMEHLVQYSQQGLHWLRNSAHLS.

Over residues 24-37 (RNALRRKERERRNQ) the composition is skewed to basic and acidic residues. 5 disordered regions span residues 24–65 (RNAL…GDEL), 116–164 (SRAQ…RATQ), 197–299 (ERPP…GETN), 323–496 (KVEP…SNQY), and 523–728 (IKST…SINA). The span at 42–52 (DDGTFNSSYSL) shows a compositional bias: polar residues. Positions 123–132 (SSICSTTTST) are enriched in low complexity. 2 stretches are compositionally biased toward polar residues: residues 251–261 (LKSSSETSVHC) and 334–344 (KDSQLVSSGHN). Over residues 381–392 (QQAAQRTALRAL) the composition is skewed to low complexity. A compositionally biased stretch (polar residues) spans 396–408 (AVVQQPNCRTSVP). The segment covering 409 to 445 (SSKGSSSSSSSGSSSSSSDSESSSGSDSETESSSSES) has biased composition (low complexity). Residues 485–496 (QNESHGSESNQY) show a composition bias toward polar residues. Residues 523–533 (IKSTCKEEQRP) show a composition bias toward basic and acidic residues. Low complexity-rich tracts occupy residues 550–561 (PPAAVAVAVSAA) and 569–579 (CAPAENAPAPA). Basic and acidic residues predominate over residues 589 to 607 (RRTERTSAGDGANCHRPEE). The span at 668–678 (TESSSSSSSSD) shows a compositional bias: low complexity. A compositionally biased stretch (polar residues) spans 692–705 (KAQTVAASASSGND). S755 bears the Phosphoserine mark. Disordered regions lie at residues 783–856 (PQEP…LSAN), 879–964 (PISP…RDCK), and 1100–1138 (AAQAPSPWGASGKSTGTPSPMSPNPSPASSVGSQGSLSN). Basic and acidic residues predominate over residues 830-842 (REIKKSQGEKDSS). Positions 843-856 (SRLATSTSNTLSAN) are enriched in polar residues. At S881 the chain carries Phosphoserine. The span at 894–909 (EDLTSSSRPNGNSLFT) shows a compositional bias: polar residues.

It belongs to the AF4 family. In terms of tissue distribution, preferentially expressed in lymphoid tissues, highest levels being found in the thymus.

It localises to the nucleus. In terms of biological role, putative transcription activator that may function in lymphoid development and oncogenesis. Binds, in vitro, to double-stranded DNA. This is AF4/FMR2 family member 3 from Homo sapiens (Human).